A 139-amino-acid polypeptide reads, in one-letter code: Large ribosomal subunit protein bL17 (139 aa).

Residues 117–139 form a disordered region; that stretch reads DRDPEAKGQDSGPVEIKDESEEG.

The protein belongs to the bacterial ribosomal protein bL17 family. In terms of assembly, part of the 50S ribosomal subunit. Contacts protein L32.

The chain is Large ribosomal subunit protein bL17 from Rhodospirillum centenum (strain ATCC 51521 / SW).